A 331-amino-acid polypeptide reads, in one-letter code: ADP-L-glycero-D-manno-heptose-6-epimerase (331 aa).

NADP(+)-binding positions include 11-12 (FI), 32-33 (DN), Lys39, Lys54, 75-79 (EGACS), and Asn92. The Proton acceptor role is filled by Tyr139. An NADP(+)-binding site is contributed by Lys143. Asn168 serves as a coordination point for substrate. NADP(+)-binding residues include Val169 and Lys177. Lys177 serves as the catalytic Proton acceptor. Substrate-binding positions include Arg179, His186, 200–203 (FGEY), Arg213, and Tyr292.

The protein belongs to the NAD(P)-dependent epimerase/dehydratase family. HldD subfamily. In terms of assembly, homopentamer. Requires NADP(+) as cofactor.

It catalyses the reaction ADP-D-glycero-beta-D-manno-heptose = ADP-L-glycero-beta-D-manno-heptose. It participates in nucleotide-sugar biosynthesis; ADP-L-glycero-beta-D-manno-heptose biosynthesis; ADP-L-glycero-beta-D-manno-heptose from D-glycero-beta-D-manno-heptose 7-phosphate: step 4/4. In terms of biological role, catalyzes the interconversion between ADP-D-glycero-beta-D-manno-heptose and ADP-L-glycero-beta-D-manno-heptose via an epimerization at carbon 6 of the heptose. The chain is ADP-L-glycero-D-manno-heptose-6-epimerase from Cupriavidus necator (strain ATCC 17699 / DSM 428 / KCTC 22496 / NCIMB 10442 / H16 / Stanier 337) (Ralstonia eutropha).